The chain runs to 211 residues: Large ribosomal subunit protein uL4 (211 aa).

A disordered region spans residues 44–94 (RSGNHATKTRSEVRGGGKKPWSQKGTGHARQGSTRAPHWVGGGTVHGPQKR).

The protein belongs to the universal ribosomal protein uL4 family. As to quaternary structure, part of the 50S ribosomal subunit.

One of the primary rRNA binding proteins, this protein initially binds near the 5'-end of the 23S rRNA. It is important during the early stages of 50S assembly. It makes multiple contacts with different domains of the 23S rRNA in the assembled 50S subunit and ribosome. Functionally, forms part of the polypeptide exit tunnel. This is Large ribosomal subunit protein uL4 from Leptospira borgpetersenii serovar Hardjo-bovis (strain JB197).